A 358-amino-acid chain; its full sequence is Protein-glutamate methylesterase/protein-glutamine glutaminase 1 (358 aa).

Residues 8–125 enclose the Response regulatory domain; sequence RVLIVDDSAV…ARGLEGYAEE (118 aa). Position 59 is a 4-aspartylphosphate (Asp-59). A CheB-type methylesterase domain is found at 157–352; that stretch reads PVPGSALRFR…LERVAERLIA (196 aa). Catalysis depends on residues Ser-177, His-203, and Asp-299.

This sequence belongs to the CheB family. Phosphorylated by CheA. Phosphorylation of the N-terminal regulatory domain activates the methylesterase activity.

The protein localises to the cytoplasm. The catalysed reaction is [protein]-L-glutamate 5-O-methyl ester + H2O = L-glutamyl-[protein] + methanol + H(+). The enzyme catalyses L-glutaminyl-[protein] + H2O = L-glutamyl-[protein] + NH4(+). Its function is as follows. Involved in chemotaxis. Part of a chemotaxis signal transduction system that modulates chemotaxis in response to various stimuli. Catalyzes the demethylation of specific methylglutamate residues introduced into the chemoreceptors (methyl-accepting chemotaxis proteins or MCP) by CheR. Also mediates the irreversible deamidation of specific glutamine residues to glutamic acid. The sequence is that of Protein-glutamate methylesterase/protein-glutamine glutaminase 1 from Xanthomonas campestris pv. campestris (strain ATCC 33913 / DSM 3586 / NCPPB 528 / LMG 568 / P 25).